The sequence spans 326 residues: tRNA uridine(34) hydroxylase (326 aa).

The Rhodanese domain maps to 123–217; the sequence is SDPDVILVDT…YLEEVKQEES (95 aa). The Cysteine persulfide intermediate role is filled by Cys177.

It belongs to the TrhO family.

It carries out the reaction uridine(34) in tRNA + AH2 + O2 = 5-hydroxyuridine(34) in tRNA + A + H2O. Functionally, catalyzes oxygen-dependent 5-hydroxyuridine (ho5U) modification at position 34 in tRNAs. This is tRNA uridine(34) hydroxylase from Shewanella denitrificans (strain OS217 / ATCC BAA-1090 / DSM 15013).